The primary structure comprises 345 residues: NADPH dehydrogenase (345 aa).

23–26 (SPMC) provides a ligand contact to FMN. Tyr-28 serves as a coordination point for substrate. Residues Ala-60 and Gln-102 each contribute to the FMN site. 164 to 167 (HGAH) contributes to the substrate binding site. FMN contacts are provided by residues Arg-215 and 307 to 308 (GR).

Belongs to the NADH:flavin oxidoreductase/NADH oxidase family. NamA subfamily. Homotetramer. FMN is required as a cofactor.

It carries out the reaction A + NADPH + H(+) = AH2 + NADP(+). Catalyzes the reduction of the double bond of an array of alpha,beta-unsaturated aldehydes and ketones. It also reduces the nitro group of nitroester and nitroaromatic compounds. It could have a role in detoxification processes. In Bacillus cereus (strain Q1), this protein is NADPH dehydrogenase.